The primary structure comprises 747 residues: RNA polymerase II assembly factor rtp1 (747 aa).

7 HEAT repeats span residues 37–75, 103–141, 320–358, 381–418, 459–485, 486–523, and 557–594; these read NYFL…LLGV, QIYN…NCHE, DIIR…VCGT, SQLA…NVDS, EENE…LDLE, NPIS…SKDD, and INPV…KYDD.

It belongs to the Tango6 family. Interacts with RNA polymerase II subunits. Interacts with nuclear pore complex subunits.

Its subcellular location is the cytoplasm. It localises to the nucleus. Its function is as follows. Required for the cytoplasmic assembly and the nuclear import of RNA polymerase II. This is RNA polymerase II assembly factor rtp1 from Schizosaccharomyces pombe (strain 972 / ATCC 24843) (Fission yeast).